The primary structure comprises 268 residues: Interleukin-1 alpha (268 aa).

A propeptide spanning residues 1 to 112 (MAKVPDLFED…DTEEEIIKPR (112 aa)) is cleaved from the precursor. An N6-acetyllysine modification is found at Lys82. The interval 82 to 86 (KKRRL) is nuclear localization signal (NLS). Position 87 is a phosphoserine (Ser87). N-linked (GlcNAc...) asparagine glycans are attached at residues Asn102 and Asn141.

Belongs to the IL-1 family. In terms of assembly, monomer. Interacts with TMED10; the interaction mediates the translocation from the cytoplasm into the ERGIC (endoplasmic reticulum-Golgi intermediate compartment) and thereby secretion. Interacts with IL1R1. Interacts with S100A13; this interaction is the first step in the export of IL1A, followed by direct translocation of this complex across the plasma membrane. In terms of processing, acetylated within its nuclear localization sequence, which impacts subcellular localization. Post-translationally, proteolytic processed by CAPN1 in a calcium-dependent manner. Cleavage from 31 kDa precursor to 18 kDa biologically active molecules. Phosphorylated. Phosphorylation greatly enhances susceptibility to digestion and promotes the conversion of pre-IL1A alpha to the biologically active IL1A.

It localises to the nucleus. It is found in the cytoplasm. Its subcellular location is the secreted. Its function is as follows. Cytokine constitutively present intracellularly in nearly all resting non-hematopoietic cells that plays an important role in inflammation and bridges the innate and adaptive immune systems. After binding to its receptor IL1R1 together with its accessory protein IL1RAP, forms the high affinity interleukin-1 receptor complex. Signaling involves the recruitment of adapter molecules such as MYD88, IRAK1 or IRAK4. In turn, mediates the activation of NF-kappa-B and the three MAPK pathways p38, p42/p44 and JNK pathways. Within the cell, acts as an alarmin and cell death results in its liberation in the extracellular space after disruption of the cell membrane to induce inflammation and alert the host to injury or damage. In addition to its role as a danger signal, which occurs when the cytokine is passively released by cell necrosis, directly senses DNA damage and acts as signal for genotoxic stress without loss of cell integrity. This Lama glama (Llama) protein is Interleukin-1 alpha (IL1A).